Consider the following 346-residue polypeptide: C5a anaphylatoxin chemotactic receptor 1 (346 aa).

Residues 1–33 (MDDNNSDWTSYDFGNDTIPSPNEISLSHIGTRH) lie on the Extracellular side of the membrane. N-linked (GlcNAc...) asparagine glycans are attached at residues asparagine 4 and asparagine 15. Residues 34-60 (WITLVCYGIVFLLGVPGNALVVWVTGF) traverse the membrane as a helical segment. Residues 61–65 (RMPNS) lie on the Cytoplasmic side of the membrane. A helical transmembrane segment spans residues 66–89 (VNAQWFLNLAIADLLCCLSLPILM). Topologically, residues 90–106 (VPLAQDQHWPFGALACK) are extracellular. A disulfide bond links cysteine 105 and cysteine 183. A helical transmembrane segment spans residues 107–128 (LFSGIFYMMMYCSVLLLVVISL). Over 129-149 (DRFLLVTKPVWCQNNRQPRQA) the chain is Cytoplasmic. Residues 150-170 (RILCFIIWILGLLGSSPYFAH) traverse the membrane as a helical segment. Over 171-194 (MEIQHHSETKTVCTGSYSSLGHAW) the chain is Extracellular. Residues 195 to 220 (AITIIRSFLFFLLPFLIICISHWKVY) form a helical membrane-spanning segment. The Cytoplasmic segment spans residues 221–238 (HMTSSGRRQRDKSSRTLR). Residues 239–261 (VILALVLGFFLCWTPLHIVDLLI) traverse the membrane as a helical segment. The Extracellular segment spans residues 262–279 (LVSDQPSERFEVNLNLAH). The chain crosses the membrane as a helical span at residues 280-300 (VLTLCLAYINSCLNPLLYVCL). The Cytoplasmic portion of the chain corresponds to 301–346 (GRGFKENLISSLRSVLHFASEAPTHGPSMTTNSKSTTDGVFREKPV). Residues 323–346 (PTHGPSMTTNSKSTTDGVFREKPV) form a disordered region. Polar residues predominate over residues 327–338 (PSMTTNSKSTTD).

The protein belongs to the G-protein coupled receptor 1 family.

The protein resides in the cell membrane. Its function is as follows. Receptor for the chemotactic and inflammatory peptide anaphylatoxin C5a. This receptor stimulates chemotaxis, granule enzyme release and superoxide anion production. This Danio rerio (Zebrafish) protein is C5a anaphylatoxin chemotactic receptor 1 (c5ar1).